Reading from the N-terminus, the 466-residue chain is Transcription factor SOX-10 (466 aa).

5 disordered regions span residues 1-67, 160-198, 213-275, 355-375, and 433-466; these read MAEE…DDDK, LRMQHKKDHPDYKYQPRRRKNGKAAQGEAECPGGETDQG, DHRH…DFGN, QVKTETTGPQGPPHYTDQPST, and RPLYTAISDPSPSGPQSHSPTHWEQPVYTTLSRP. Residues 23–32 are compositionally biased toward low complexity; it reads LSPSSAPSLG. At S24 the chain carries Phosphoserine. Positions 62 to 102 are dimerization (DIM); it reads EADDDKFPVCIREAVSQVLSGYDWTLVPMPVRVNGASKSKP. The segment at residues 104 to 172 is a DNA-binding region (HMG box); sequence VKRPMNAFMV…QHKKDHPDYK (69 aa). Basic and acidic residues-rich tracts occupy residues 160–173 and 254–271; these read LRMQHKKDHPDYKY and ADPKRDGRSLGEGGKPHI. Positions 228–310 are transactivation domain (TAM); that stretch reads PEHPSGQSHG…LPPNGHPGHV (83 aa). The transactivation domain (TAC) stretch occupies residues 353-466; sequence KAQVKTETTG…QPVYTTLSRP (114 aa). Residues 440–466 are compositionally biased toward polar residues; it reads SDPSPSGPQSHSPTHWEQPVYTTLSRP.

As to quaternary structure, monomer. Interacts with Armcx3 at the mitochondrial outer membrane surface. Interacts with PAX3. Predominant expression in glial cells of the nervous system.

The protein localises to the cytoplasm. Its subcellular location is the nucleus. The protein resides in the mitochondrion outer membrane. Transcription factor that plays a central role in developing and mature glia. Specifically activates expression of myelin genes, during oligodendrocyte (OL) maturation, such as DUSP15 and MYRF, thereby playing a central role in oligodendrocyte maturation and CNS myelination. Once induced, MYRF cooperates with SOX10 to implement the myelination program. Transcriptional activator of MITF, acting synergistically with PAX3. Transcriptional activator of MBP, via binding to the gene promoter. In Rattus norvegicus (Rat), this protein is Transcription factor SOX-10 (Sox10).